The primary structure comprises 373 residues: CXADR-like membrane protein (373 aa).

Positions 1-17 (MSLFFLWLVSYYVGTLG) are cleaved as a signal peptide. Ig-like C2-type domains follow at residues 18 to 126 (THTE…VILK) and 134 to 223 (PKCE…VRVT). Topologically, residues 18-234 (THTEIKRVAE…QYVQSIGMVA (217 aa)) are extracellular. Cystine bridges form between cysteine 34-cysteine 110 and cysteine 152-cysteine 207. Residues asparagine 73 and asparagine 196 are each glycosylated (N-linked (GlcNAc...) asparagine). Residues 235 to 255 (GAVTGIVAGALLIFLLIWLLI) traverse the membrane as a helical segment. Over 256–373 (RRKSKDRYEE…PSQSKAFQTV (118 aa)) the chain is Cytoplasmic. Residues 263-280 (YEEEDRPNEIREDAEAPR) show a composition bias toward basic and acidic residues. The tract at residues 263-373 (YEEEDRPNEI…PSQSKAFQTV (111 aa)) is disordered. 3 stretches are compositionally biased toward low complexity: residues 287 to 313 (SSSS…ASRS), 321 to 332 (AAPQQPGLAPQA), and 353 to 363 (LTKAETTLSTT). The segment covering 364–373 (PSQSKAFQTV) has biased composition (polar residues).

Predominantly expressed in epithelial cells within different tissues and in the white adipose tissue. Expressed at high levels in the heart and brain, at intermediate levels in the lung, skeletal muscle, kidney and testis and at low levels in the liver and spleen.

The protein resides in the cell junction. The protein localises to the tight junction. It localises to the cell membrane. In terms of biological role, may be involved in the cell-cell adhesion. May play a role in adipocyte differentiation and development of obesity. Is required for normal small intestine development. The chain is CXADR-like membrane protein (Clmp) from Mus musculus (Mouse).